The chain runs to 235 residues: U1 small nuclear ribonucleoprotein C (235 aa).

Residues 4-36 form a Matrin-type zinc finger; that stretch reads YYCEYCDIYLTHSSPVGRRQHIHGRKHISAKIE. Residues 131-235 are disordered; sequence QAHNNYSYPN…SKEHIESDIS (105 aa). Over residues 134–168 the composition is skewed to low complexity; sequence NNYSYPNSINPSNQINYSNNYGSNNFNNSNEFNKN. Residues 169 to 189 are compositionally biased toward basic and acidic residues; that stretch reads MNEKDNINNNDIHDNKVKTDE. Positions 192–203 are enriched in low complexity; sequence PINNDNLNNTRN. Composition is skewed to basic and acidic residues over residues 205-217 and 225-235; these read SYEE…DHKK and NSKEHIESDIS.

This sequence belongs to the U1 small nuclear ribonucleoprotein C family. As to quaternary structure, U1 snRNP is composed of the 7 core Sm proteins B/B', D1, D2, D3, E, F and G that assemble in a heptameric protein ring on the Sm site of the small nuclear RNA to form the core snRNP, and at least 3 U1 snRNP-specific proteins U1-70K, U1-A and U1-C. U1-C interacts with U1 snRNA and the 5' splice-site region of the pre-mRNA.

Its subcellular location is the nucleus. Functionally, component of the spliceosomal U1 snRNP, which is essential for recognition of the pre-mRNA 5' splice-site and the subsequent assembly of the spliceosome. U1-C is directly involved in initial 5' splice-site recognition for both constitutive and regulated alternative splicing. The interaction with the 5' splice-site seems to precede base-pairing between the pre-mRNA and the U1 snRNA. Stimulates commitment or early (E) complex formation by stabilizing the base pairing of the 5' end of the U1 snRNA and the 5' splice-site region. The polypeptide is U1 small nuclear ribonucleoprotein C (Plasmodium falciparum (isolate 3D7)).